We begin with the raw amino-acid sequence, 469 residues long: Ribulose bisphosphate carboxylase large chain (469 aa).

The residue at position 5 (lysine 5) is an N6,N6,N6-trimethyllysine. Substrate-binding residues include asparagine 114 and threonine 164. Lysine 166 serves as the catalytic Proton acceptor. Position 168 (lysine 168) interacts with substrate. Mg(2+) is bound by residues lysine 192, aspartate 194, and glutamate 195. Lysine 192 bears the N6-carboxylysine mark. Residue histidine 285 is the Proton acceptor of the active site. The substrate site is built by arginine 286, histidine 318, and serine 370.

The protein belongs to the RuBisCO large chain family. Type I subfamily. In terms of assembly, heterohexadecamer of 8 large chains and 8 small chains; disulfide-linked. The disulfide link is formed within the large subunit homodimers. It depends on Mg(2+) as a cofactor. In terms of processing, the disulfide bond which can form in the large chain dimeric partners within the hexadecamer appears to be associated with oxidative stress and protein turnover.

It is found in the plastid. The protein localises to the chloroplast. The enzyme catalyses 2 (2R)-3-phosphoglycerate + 2 H(+) = D-ribulose 1,5-bisphosphate + CO2 + H2O. It catalyses the reaction D-ribulose 1,5-bisphosphate + O2 = 2-phosphoglycolate + (2R)-3-phosphoglycerate + 2 H(+). In terms of biological role, ruBisCO catalyzes two reactions: the carboxylation of D-ribulose 1,5-bisphosphate, the primary event in carbon dioxide fixation, as well as the oxidative fragmentation of the pentose substrate in the photorespiration process. Both reactions occur simultaneously and in competition at the same active site. This is Ribulose bisphosphate carboxylase large chain from Cephalanthus occidentalis (Common buttonbush).